We begin with the raw amino-acid sequence, 285 residues long: Probable nudix hydrolase C6G9.05 (285 aa).

Positions 114-254 (TRFASVLMPL…DLLYVEFNID (141 aa)) constitute a Nudix hydrolase domain. Positions 153–175 (GRVEPSDGSHYYAALRETYEEIG) match the Nudix box motif. 2 residues coordinate Mg(2+): glutamate 169 and glutamate 173.

Belongs to the Nudix hydrolase family. PCD1 subfamily. Mn(2+) is required as a cofactor. Requires Mg(2+) as cofactor.

In terms of biological role, probably mediates the hydrolysis of some nucleoside diphosphate derivatives. The protein is Probable nudix hydrolase C6G9.05 of Schizosaccharomyces pombe (strain 972 / ATCC 24843) (Fission yeast).